Here is a 109-residue protein sequence, read N- to C-terminus: Large ribosomal subunit protein uL22 (109 aa).

This sequence belongs to the universal ribosomal protein uL22 family. As to quaternary structure, part of the 50S ribosomal subunit.

This protein binds specifically to 23S rRNA; its binding is stimulated by other ribosomal proteins, e.g. L4, L17, and L20. It is important during the early stages of 50S assembly. It makes multiple contacts with different domains of the 23S rRNA in the assembled 50S subunit and ribosome. In terms of biological role, the globular domain of the protein is located near the polypeptide exit tunnel on the outside of the subunit, while an extended beta-hairpin is found that lines the wall of the exit tunnel in the center of the 70S ribosome. In Paraburkholderia xenovorans (strain LB400), this protein is Large ribosomal subunit protein uL22.